A 75-amino-acid polypeptide reads, in one-letter code: MPIIGVPRCLEKPFCAPAKFPFSVKKNIRILDLDPRTEAYCLSLNSVCSKRLPCKKYFYLLNSYNIKRVLGVVYC.

The protein belongs to the UPF0377 family.

This is Putative UPF0377 protein YJL222W-A from Saccharomyces cerevisiae (strain ATCC 204508 / S288c) (Baker's yeast).